The primary structure comprises 35 residues: Trypsin inhibitor 1 (35 aa).

3 disulfides stabilise this stretch: C2-C19, C9-C23, and C18-C34.

Trypsin inhibitor. This chain is Trypsin inhibitor 1, found in Spinacia oleracea (Spinach).